The primary structure comprises 241 residues: Prolactin-8A8 (241 aa).

Positions 1–30 are cleaved as a signal peptide; the sequence is MELQFRQPHFSDALLLLLLSNLLLWEKASS. Cystine bridges form between Cys-34–Cys-41, Cys-101–Cys-217, and Cys-234–Cys-241. N-linked (GlcNAc...) asparagine glycosylation is present at Asn-213.

The protein belongs to the somatotropin/prolactin family. In terms of tissue distribution, expressed specifically in the placenta. Predominantly expressed in spongiotrophoblast cells.

The protein localises to the secreted. This Mus musculus (Mouse) protein is Prolactin-8A8 (Prl8a8).